A 698-amino-acid chain; its full sequence is Protein let-99 (698 aa).

The 85-residue stretch at F23–K107 folds into the DEP domain. Disordered stretches follow at residues P115–I188 and I653–P672. Over residues R146–S157 the composition is skewed to basic residues. A compositionally biased stretch (basic and acidic residues) spans H178 to I188.

Its subcellular location is the cytoplasm. It is found in the cell cortex. Required for the proper orientation of spindles after the establishment of polarity. May play a role in interactions between the astral microtubules and the cortical cytoskeleton. Required for asymmetric forces on nuclei and spindles. Acts downstream of the PAR signaling as an intermediate that transduces polarity information to the machinery that positions the mitotic spindle, possibly by regulating force generation. Regulates gpr-1/2 asymmetric cortical localization during the first embryonic cell divisions. Acts antagonistically to the gpr-1/2 signaling pathway. Regulates mes-1 expression and/or localization pattern during early embryogenesis. The protein is Protein let-99 (let-99) of Caenorhabditis elegans.